The primary structure comprises 98 residues: C-X-C motif chemokine 10 (98 aa).

An N-terminal signal peptide occupies residues 1–21; that stretch reads MNQSAVLIFCLIFLTLNGTQG. Arg26 is subject to Citrulline. 2 disulfide bridges follow: Cys30/Cys57 and Cys32/Cys74.

The protein belongs to the intercrine alpha (chemokine CxC) family. In terms of assembly, monomer, dimer, and tetramer. Interacts with CXCR3 (via N-terminus).

The protein localises to the secreted. In terms of biological role, pro-inflammatory cytokine that is involved in a wide variety of processes such as chemotaxis, differentiation, and activation of peripheral immune cells, regulation of cell growth, apoptosis and modulation of angiostatic effects. Plays thereby an important role during viral infections by stimulating the activation and migration of immune cells to the infected sites. Mechanistically, binding of CXCL10 to the CXCR3 receptor activates G protein-mediated signaling and results in downstream activation of phospholipase C-dependent pathway, an increase in intracellular calcium production and actin reorganization. In turn, recruitment of activated Th1 lymphocytes occurs at sites of inflammation. Activation of the CXCL10/CXCR3 axis also plays an important role in neurons in response to brain injury for activating microglia, the resident macrophage population of the central nervous system, and directing them to the lesion site. This recruitment is an essential element for neuronal reorganization. This Canis lupus familiaris (Dog) protein is C-X-C motif chemokine 10 (CXCL10).